A 238-amino-acid polypeptide reads, in one-letter code: UDP-2,3-diacylglucosamine hydrolase (238 aa).

Residues Asp-8, His-10, Asp-41, Asn-78, and His-113 each coordinate Mn(2+). 78–79 provides a ligand contact to substrate; it reads NR. The substrate site is built by Asp-121, Ser-159, Asn-163, Lys-166, and His-194. His-194 and His-196 together coordinate Mn(2+).

Belongs to the LpxH family. Mn(2+) serves as cofactor.

The protein localises to the cell inner membrane. It carries out the reaction UDP-2-N,3-O-bis[(3R)-3-hydroxytetradecanoyl]-alpha-D-glucosamine + H2O = 2-N,3-O-bis[(3R)-3-hydroxytetradecanoyl]-alpha-D-glucosaminyl 1-phosphate + UMP + 2 H(+). The protein operates within glycolipid biosynthesis; lipid IV(A) biosynthesis; lipid IV(A) from (3R)-3-hydroxytetradecanoyl-[acyl-carrier-protein] and UDP-N-acetyl-alpha-D-glucosamine: step 4/6. In terms of biological role, hydrolyzes the pyrophosphate bond of UDP-2,3-diacylglucosamine to yield 2,3-diacylglucosamine 1-phosphate (lipid X) and UMP by catalyzing the attack of water at the alpha-P atom. Involved in the biosynthesis of lipid A, a phosphorylated glycolipid that anchors the lipopolysaccharide to the outer membrane of the cell. The sequence is that of UDP-2,3-diacylglucosamine hydrolase from Shewanella pealeana (strain ATCC 700345 / ANG-SQ1).